The primary structure comprises 555 residues: uncharacterized protein (555 aa).

Topologically, residues 1-83 (MSNEDETTRL…GRRKLLCLYG (83 aa)) are extracellular. The helical transmembrane segment at 84–104 (LVMIICIAESISMTATIPLVM) threads the bilayer. Residues 105-125 (DKVAEGISDENGHYDSVAVQT) are Cytoplasmic-facing. Residues 126-146 (IVSSISSSTMMIAGAISIFMA) traverse the membrane as a helical segment. The Extracellular segment spans residues 147-188 (GKWGELSDRIGRVRVFKYMSGIRVIGLLTHVFTLSSKMKYHK). A helical membrane pass occupies residues 189 to 209 (WAIVLTACIVPSFGGLFALVA). Residues 210–229 (NGNSYVSDIVKTEHRMVTIG) lie on the Cytoplasmic side of the membrane. A helical membrane pass occupies residues 230–250 (IMMSCIYATMGVGPMFGSFLV). The Extracellular segment spans residues 251-257 (KWTHGNG). The chain crosses the membrane as a helical span at residues 258–278 (FIPIYTSIAFVILALIICETI). The Cytoplasmic portion of the chain corresponds to 279–356 (MVEPRHETQM…LVPRHTVILL (78 aa)). The interval 289 to 311 (AHSQSTYTKRREKLRSQSGSDDA) is disordered. Residues 357–377 (IVLDILFVCGTTSCMPALILF) traverse the membrane as a helical segment. At 378-386 (STYEYKWHA) the chain is on the extracellular side. Residues 387–407 (VELGYFISILGIGRGVVLLVV) form a helical membrane-spanning segment. Topologically, residues 408 to 428 (SPTLLYTLKRIYQHLNHSIDK) are cytoplasmic. A helical membrane pass occupies residues 429–449 (IDIFCIQFSMIVITLSLFVMI). Topologically, residues 450–459 (RFGEKTPTSM) are extracellular. Residues 460 to 480 (IIFALLQALSAFCSPTLQSGI) form a helical membrane-spanning segment. Over 481 to 491 (IKYTSKKHTGE) the chain is Cytoplasmic. A helical transmembrane segment spans residues 492-512 (MFGAMALVRSCVMLVIPPILL). Topologically, residues 513-523 (KLYGSTVSVNP) are extracellular. The helical transmembrane segment at 524–544 (SLFMYIPFSTSIVAILLTFFL) threads the bilayer. Topologically, residues 545-555 (RIYKNPPLDGP) are cytoplasmic.

It is found in the membrane. This is an uncharacterized protein from Saccharomyces cerevisiae (strain ATCC 204508 / S288c) (Baker's yeast).